Consider the following 871-residue polypeptide: Phosphoinositide 3-kinase regulatory subunit 5 (871 aa).

Residue Met1 is modified to N-acetylmethionine. The segment at 25–101 (SLGRRSAPWS…TPHFPPDSDL (77 aa)) is heterodimerization. A disordered region spans residues 381–413 (MDSGYVEDSEENSEWPQKPGSQKRQGHRRPGQK). 2 positions are modified to phosphoserine: Ser451 and Ser500. Residues 646–746 (PILADMLLYY…WSNLEKVCTS (101 aa)) form an interaction with beta-gamma G protein dimers region.

As to quaternary structure, heterodimer of a catalytic subunit (PIK3CG/p120) and a regulatory (PIK3R5a/p101) subunit. Interacts with beta-gamma G protein dimers.

The protein localises to the nucleus. Its subcellular location is the cytoplasm. It is found in the cell membrane. With respect to regulation, greatly activated by G gamma proteins. Regulatory subunit of the PI3K gamma complex. Required for recruitment of the catalytic subunit to the plasma membrane via interaction with beta-gamma G protein dimers. Required for G protein-mediated activation of PIK3CG. This chain is Phosphoinositide 3-kinase regulatory subunit 5 (Pik3r5), found in Mus musculus (Mouse).